The primary structure comprises 553 residues: MTSEMKKFSKIVLFGLLISPLLASSQTKKDANQKPNIILIMADDLGWTDLSSPNTSLGYGSKYYESPNIDRLAQQGKSFAYAYTQQNCQPTRAALLSGQYATGAQNGVYNVGSLKRASKGVVTPIMPHNQNNYLQEDCVSMFETLKTAGYHTAWFGKFHAIKLGKQAESYMGVDYNVALHKETSATVNGVKVKNEFFAQNDDAKGWMFEIDNLKPYAQPYDAAYLQKVLEPIKNGNNPWLLEGTPKHLTDALGDAVVGYIKDRSKADSPFFAYIPFHAVHVSILPRLDLEAKYKAKKSLDPRHTQADYAAFVELLDQTVGRVLNALEDPNGDGNKADGIAENTMVIFYSDNGGFMGPTNNSPLRLRKGTYYEGGVRVPLIFKYPGVITPNSVNTTQEVHTIDFYPTLAEIAGAKLPSPKVQEMDGKSIASVLREESQVRDDKNELFWHFPGYMDVRNMPQSVIHYRHSDNQHYKLFYRYEDESFELYNLSNDLGETTNLLAENPSQQTLDLALKMNNKLRAWLIKNNAPTGIWAKNCEKVPYPKKDAVKKYIK.

A signal peptide spans 1–25 (MTSEMKKFSKIVLFGLLISPLLASS). The Ca(2+) site is built by Asp-43, Asp-44, and Cys-88. Cys-88 acts as the Nucleophile in catalysis. A 3-oxoalanine (Cys) modification is found at Cys-88. Residue His-159 is part of the active site. Residues Asp-350 and Asn-351 each coordinate Ca(2+).

The protein belongs to the sulfatase family. Ca(2+) is required as a cofactor. Post-translationally, the conversion to 3-oxoalanine (also known as C-formylglycine, FGly), of a serine or cysteine residue in prokaryotes and of a cysteine residue in eukaryotes, is critical for catalytic activity. This post-translational modification is severely defective in multiple sulfatase deficiency (MSD).

It localises to the secreted. Functionally, sulfatase that may be involved in ulvan degradation. Ulvan is the main polysaccharide component of the Ulvales (green seaweed) cell wall. It is composed of disaccharide building blocks comprising 3-sulfated rhamnose (Rha3S) linked to D-glucuronic acid (GlcA), L-iduronic acid (IduA), or D-xylose (Xyl). This is Sulfatase from Formosa agariphila (strain DSM 15362 / KCTC 12365 / LMG 23005 / KMM 3901 / M-2Alg 35-1).